We begin with the raw amino-acid sequence, 1164 residues long: DNA-directed RNA polymerase 132 kDa polypeptide (1164 aa).

It belongs to the RNA polymerase beta chain family. As to quaternary structure, the DNA-dependent RNA polymerase used for intermediate and late genes expression consists of eight subunits (147) kDa, (133) kDa, (35) kDa, (30) kDa, (22) kDa, (19) kDa, (18) kDa and (7) kDa totalling more than 500 kDa in mass. The same holoenzyme, with the addition of the transcription-specificity factor RAP94, is used for early gene expression.

Its subcellular location is the virion. The enzyme catalyses RNA(n) + a ribonucleoside 5'-triphosphate = RNA(n+1) + diphosphate. Part of the DNA-dependent RNA polymerase which catalyzes the transcription of viral DNA into RNA using the four ribonucleoside triphosphates as substrates. Responsible for the transcription of early, intermediate and late genes. DNA-dependent RNA polymerase associates with the early transcription factor (ETF), itself composed of D6 and A7, thereby allowing the early genes transcription. Late transcription, and probably also intermediate transcription, require newly synthesized RNA polymerase. This is DNA-directed RNA polymerase 132 kDa polypeptide (RPO132) from Camelus.